A 1010-amino-acid polypeptide reads, in one-letter code: Retinoblastoma-related protein 3 (1010 aa).

Residues 416 to 616 (TPVSTAMTTA…EKGSSMYNSL (201 aa)) form a domain A region. A pocket region spans residues 416-858 (TPVSTAMTTA…NEVFIPAVKS (443 aa)). Positions 617–727 (IVARPALSVE…PAAGGETCAE (111 aa)) are spacer. A domain B region spans residues 728 to 858 (TGIGVFFSKI…NEVFIPAVKS (131 aa)). Disordered regions lie at residues 867-889 (ASAS…FPES) and 986-1010 (GSDR…PSDS).

The protein belongs to the retinoblastoma protein (RB) family.

The protein localises to the nucleus. Functionally, regulator of biological processes that recruits a histone deacetylase to control gene transcription. May play a role in the entry into mitosis, negatively regulating the cell proliferation. Formation of stable complexes with geminiviridae replication-associated proteins may create a cellular environment which favors viral DNA replication. The chain is Retinoblastoma-related protein 3 (RBR3) from Zea mays (Maize).